The following is a 267-amino-acid chain: 4-hydroxy-tetrahydrodipicolinate reductase (267 aa).

NAD(+)-binding positions include Gly8 to Met13, Glu34, Gly98 to Thr100, and Ser122 to Met125. Catalysis depends on His155, which acts as the Proton donor/acceptor. His156 is a binding site for (S)-2,3,4,5-tetrahydrodipicolinate. Lys159 acts as the Proton donor in catalysis. Gly165–Thr166 contributes to the (S)-2,3,4,5-tetrahydrodipicolinate binding site.

Belongs to the DapB family.

It is found in the cytoplasm. It catalyses the reaction (S)-2,3,4,5-tetrahydrodipicolinate + NAD(+) + H2O = (2S,4S)-4-hydroxy-2,3,4,5-tetrahydrodipicolinate + NADH + H(+). It carries out the reaction (S)-2,3,4,5-tetrahydrodipicolinate + NADP(+) + H2O = (2S,4S)-4-hydroxy-2,3,4,5-tetrahydrodipicolinate + NADPH + H(+). Its pathway is amino-acid biosynthesis; L-lysine biosynthesis via DAP pathway; (S)-tetrahydrodipicolinate from L-aspartate: step 4/4. Its function is as follows. Catalyzes the conversion of 4-hydroxy-tetrahydrodipicolinate (HTPA) to tetrahydrodipicolinate. In Syntrophobacter fumaroxidans (strain DSM 10017 / MPOB), this protein is 4-hydroxy-tetrahydrodipicolinate reductase.